Consider the following 708-residue polypeptide: Alpha-galactosidase (708 aa).

Asp441 acts as the Nucleophile in catalysis. Residue Asp505 is the Proton donor of the active site.

It belongs to the glycosyl hydrolase 36 family. As to quaternary structure, homotetramer.

The catalysed reaction is Hydrolysis of terminal, non-reducing alpha-D-galactose residues in alpha-D-galactosides, including galactose oligosaccharides, galactomannans and galactolipids.. The polypeptide is Alpha-galactosidase (rafA) (Escherichia coli).